The chain runs to 434 residues: 3-phosphoshikimate 1-carboxyvinyltransferase (434 aa).

3 residues coordinate 3-phosphoshikimate: Lys22, Ser23, and Arg27. Residue Lys22 participates in phosphoenolpyruvate binding. Residues Gly93 and Arg121 each contribute to the phosphoenolpyruvate site. Positions 168, 169, 170, 199, 320, and 347 each coordinate 3-phosphoshikimate. Position 170 (Gln170) interacts with phosphoenolpyruvate. Asp320 serves as the catalytic Proton acceptor. Phosphoenolpyruvate-binding residues include Arg351, Arg394, and Lys419.

The protein belongs to the EPSP synthase family. Monomer.

It localises to the cytoplasm. It carries out the reaction 3-phosphoshikimate + phosphoenolpyruvate = 5-O-(1-carboxyvinyl)-3-phosphoshikimate + phosphate. It functions in the pathway metabolic intermediate biosynthesis; chorismate biosynthesis; chorismate from D-erythrose 4-phosphate and phosphoenolpyruvate: step 6/7. Functionally, catalyzes the transfer of the enolpyruvyl moiety of phosphoenolpyruvate (PEP) to the 5-hydroxyl of shikimate-3-phosphate (S3P) to produce enolpyruvyl shikimate-3-phosphate and inorganic phosphate. This chain is 3-phosphoshikimate 1-carboxyvinyltransferase, found in Burkholderia cenocepacia (strain HI2424).